A 473-amino-acid polypeptide reads, in one-letter code: Ribulose bisphosphate carboxylase large chain (473 aa).

The substrate site is built by Asn116 and Thr166. Catalysis depends on Lys168, which acts as the Proton acceptor. Lys170 is a binding site for substrate. Mg(2+) is bound by residues Lys194, Asp196, and Glu197. At Lys194 the chain carries N6-carboxylysine. His287 serves as the catalytic Proton acceptor. Substrate-binding residues include Arg288, His320, and Ser372.

Belongs to the RuBisCO large chain family. Type I subfamily. Heterohexadecamer of 8 large chains and 8 small chains. It depends on Mg(2+) as a cofactor.

It catalyses the reaction 2 (2R)-3-phosphoglycerate + 2 H(+) = D-ribulose 1,5-bisphosphate + CO2 + H2O. The enzyme catalyses D-ribulose 1,5-bisphosphate + O2 = 2-phosphoglycolate + (2R)-3-phosphoglycerate + 2 H(+). Functionally, ruBisCO catalyzes two reactions: the carboxylation of D-ribulose 1,5-bisphosphate, the primary event in carbon dioxide fixation, as well as the oxidative fragmentation of the pentose substrate. Both reactions occur simultaneously and in competition at the same active site. This chain is Ribulose bisphosphate carboxylase large chain, found in Hydrogenophaga pseudoflava (Pseudomonas carboxydoflava).